We begin with the raw amino-acid sequence, 257 residues long: MPASMFSIDNILAARPRCKDSVLPVAPSAAAPVVFPALHGDSLYGASGGASSDYGAFYPRPVAPGGAGLPAAVSGSRLGYNNYFYGQLHVQAAPVGPACCGAVPPLGAQQCSCVPAPSGYEGPGSVLVSPVPHQMLPYMNVGTLSRTELQLLNQLHCRRKRRHRTIFTDEQLEALENLFQETKYPDVGTREQLARKVHLREEKVEVWFKNRRAKWRRQKRSSSEESENAEKWNKTSSSKASPEKREEEGKSDLDSDS.

The homeobox DNA-binding region spans 160–219; sequence KRRHRTIFTDEQLEALENLFQETKYPDVGTREQLARKVHLREEKVEVWFKNRRAKWRRQK. Residues 213 to 257 are disordered; that stretch reads AKWRRQKRSSSEESENAEKWNKTSSSKASPEKREEEGKSDLDSDS. A compositionally biased stretch (basic and acidic residues) spans 241 to 257; sequence SPEKREEEGKSDLDSDS.

It belongs to the paired homeobox family. Bicoid subfamily.

The protein localises to the nucleus. Functionally, regulates chordin (CHRD). May play a role in spatial programing within discrete embryonic fields or lineage compartments during organogenesis. In concert with NKX3-2, plays a role in defining the structural components of the middle ear; required for the development of the entire tympanic ring. Probably involved in the regulatory networks that define neural crest cell fate specification and determine mesoderm cell lineages in mammals. In Pongo pygmaeus (Bornean orangutan), this protein is Homeobox protein goosecoid (GSC).